Here is a 59-residue protein sequence, read N- to C-terminus: Large ribosomal subunit protein uL30 (59 aa).

The protein belongs to the universal ribosomal protein uL30 family. As to quaternary structure, part of the 50S ribosomal subunit.

This Pectobacterium atrosepticum (strain SCRI 1043 / ATCC BAA-672) (Erwinia carotovora subsp. atroseptica) protein is Large ribosomal subunit protein uL30.